We begin with the raw amino-acid sequence, 371 residues long: 4-hydroxy-3-methylbut-2-en-1-yl diphosphate synthase (flavodoxin) (371 aa).

[4Fe-4S] cluster-binding residues include cysteine 272, cysteine 275, cysteine 307, and glutamate 314.

This sequence belongs to the IspG family. Requires [4Fe-4S] cluster as cofactor.

It carries out the reaction (2E)-4-hydroxy-3-methylbut-2-enyl diphosphate + oxidized [flavodoxin] + H2O + 2 H(+) = 2-C-methyl-D-erythritol 2,4-cyclic diphosphate + reduced [flavodoxin]. It participates in isoprenoid biosynthesis; isopentenyl diphosphate biosynthesis via DXP pathway; isopentenyl diphosphate from 1-deoxy-D-xylulose 5-phosphate: step 5/6. Its function is as follows. Converts 2C-methyl-D-erythritol 2,4-cyclodiphosphate (ME-2,4cPP) into 1-hydroxy-2-methyl-2-(E)-butenyl 4-diphosphate. The polypeptide is 4-hydroxy-3-methylbut-2-en-1-yl diphosphate synthase (flavodoxin) (Pseudomonas aeruginosa (strain LESB58)).